Consider the following 291-residue polypeptide: Lactoylglutathione lyase (291 aa).

VOC domains are found at residues 24–149 (RLLH…LIQR) and 155–283 (PLCQ…LVDN). 3 residues coordinate substrate: Arg-31, Asn-82, and His-96. The active site involves His-96. The active-site Proton donor/acceptor is Glu-145. Glu-145 lines the Ni(2+) pocket. Active-site residues include Gln-158 and Glu-209. Ni(2+) is bound at residue Glu-209.

The protein belongs to the glyoxalase I family. In terms of assembly, monomer. Requires Ni(2+) as cofactor. Post-translationally, phosphorylated after gibberellin treatment. As to expression, expressed in callus, stem, leaves, panicles and maturing seeds (at protein level).

It carries out the reaction (R)-S-lactoylglutathione = methylglyoxal + glutathione. The protein operates within secondary metabolite metabolism; methylglyoxal degradation; (R)-lactate from methylglyoxal: step 1/2. Catalyzes the conversion of hemimercaptal, formed from methylglyoxal and glutathione, to S-lactoylglutathione. Involved in the detoxifiation of methylglyoxal. Can functionally complement growth defect of a yeast mutant lacking GLY I. Involved in abiotic stress response. Over-expression of GLYI-11 in tobacco increases tolerance to osmotic, oxidative and salt stresses. In Oryza sativa subsp. japonica (Rice), this protein is Lactoylglutathione lyase.